Consider the following 692-residue polypeptide: MSYTPMSDLGQQGLFDITRTLLQQPDLASLSEALSQLVKRSALADSAGIVLWQAQSQRAQYYATRENGRPVEYEDETVLAHGPVRRILSRPDALHCNFHEFTETWPQLAASGLYPEFGHYCLLPLAAEGRIFGGCEFIRQEDRPWSEKEYDRLHTFTQIVGVVAEQIQNRVNNNVDYDLLCRERDNFRILVAITNAVLSRLDIDELVSEVAKEIHHYFNIDAISIVLRSHRKNKLNIYSTHYLDEHHPAHEQSEVDEAGTLTERVFKSKEMLLINLNERDPLAPYERMLFDTWGNQIQTLCLLPLMSGKTMLGVLKLAQCEEKVFTTANLKLLRQIAERVAIAVDNALAYQEIHRLKERLVDENLALTEQLNNVDSEFGEIIGRSEAMYNVLKQVEMVAQSDSTVLILGETGTGKELIARAIHNLSGRSGRRMVKMNCAAMPAGLLESDLFGHERGAFTGASAQRIGRFELADKSSLFLDEVGDMPLELQPKLLRVLQEQEFERLGSNKLIQTDVRLIAATNRDLKKMVADREFRNDLYYRLNVFPIQLPPLRERPEDIPLLVKAFTFKIARRMGRNIDSIPAETLRTLSSMEWPGNVRELENVVERAVLLTRGNVLQLSLPDITAVTPDTSPVATESDKEGEDEYQLIIRVLKETNGVVAGPKGAAQRLGLKRTTLLSRMKRLGIDKDALA.

The GAF domain occupies 202-344 (DIDELVSEVA…QIAERVAIAV (143 aa)). The 230-residue stretch at 381-610 (IIGRSEAMYN…LENVVERAVL (230 aa)) folds into the Sigma-54 factor interaction domain. Residues 409–416 (GETGTGKE) and 472–481 (ADKSSLFLDE) each bind ATP. The H-T-H motif DNA-binding region spans 663–682 (PKGAAQRLGLKRTTLLSRMK).

Required for induction of expression of the formate dehydrogenase H and hydrogenase-3 structural genes. This Salmonella typhimurium (strain LT2 / SGSC1412 / ATCC 700720) protein is Formate hydrogenlyase transcriptional activator (fhlA).